A 359-amino-acid chain; its full sequence is Peptide chain release factor 1 (359 aa).

Q235 carries the N5-methylglutamine modification.

Belongs to the prokaryotic/mitochondrial release factor family. Post-translationally, methylated by PrmC. Methylation increases the termination efficiency of RF1.

It is found in the cytoplasm. In terms of biological role, peptide chain release factor 1 directs the termination of translation in response to the peptide chain termination codons UAG and UAA. The protein is Peptide chain release factor 1 of Nitrosomonas europaea (strain ATCC 19718 / CIP 103999 / KCTC 2705 / NBRC 14298).